A 511-amino-acid polypeptide reads, in one-letter code: 2,3-bisphosphoglycerate-independent phosphoglycerate mutase (511 aa).

Mn(2+) contacts are provided by Asp-14 and Ser-64. Ser-64 serves as the catalytic Phosphoserine intermediate. Residues His-125, 155-156, Arg-187, Arg-193, 259-262, and Lys-333 each bind substrate; these read RD and RADR. 5 residues coordinate Mn(2+): Asp-400, His-404, Asp-441, His-442, and His-460.

This sequence belongs to the BPG-independent phosphoglycerate mutase family. In terms of assembly, monomer. Mn(2+) serves as cofactor.

The enzyme catalyses (2R)-2-phosphoglycerate = (2R)-3-phosphoglycerate. Its pathway is carbohydrate degradation; glycolysis; pyruvate from D-glyceraldehyde 3-phosphate: step 3/5. Its function is as follows. Catalyzes the interconversion of 2-phosphoglycerate and 3-phosphoglycerate. The sequence is that of 2,3-bisphosphoglycerate-independent phosphoglycerate mutase from Idiomarina loihiensis (strain ATCC BAA-735 / DSM 15497 / L2-TR).